We begin with the raw amino-acid sequence, 404 residues long: S-adenosylmethionine synthase (404 aa).

139 to 144 (GKGSTD) contacts ATP.

It belongs to the AdoMet synthase 2 family. Requires Mg(2+) as cofactor.

The enzyme catalyses L-methionine + ATP + H2O = S-adenosyl-L-methionine + phosphate + diphosphate. Its pathway is amino-acid biosynthesis; S-adenosyl-L-methionine biosynthesis; S-adenosyl-L-methionine from L-methionine: step 1/1. Functionally, catalyzes the formation of S-adenosylmethionine from methionine and ATP. The chain is S-adenosylmethionine synthase from Saccharolobus islandicus (strain Y.N.15.51 / Yellowstone #2) (Sulfolobus islandicus).